The following is a 229-amino-acid chain: Demethylmenaquinone methyltransferase (229 aa).

Residues Thr-57, Asp-77, and 101-102 (DV) contribute to the S-adenosyl-L-methionine site.

Belongs to the class I-like SAM-binding methyltransferase superfamily. MenG/UbiE family.

The enzyme catalyses a 2-demethylmenaquinol + S-adenosyl-L-methionine = a menaquinol + S-adenosyl-L-homocysteine + H(+). The protein operates within quinol/quinone metabolism; menaquinone biosynthesis; menaquinol from 1,4-dihydroxy-2-naphthoate: step 2/2. Methyltransferase required for the conversion of demethylmenaquinol (DMKH2) to menaquinol (MKH2). This Chlamydia muridarum (strain MoPn / Nigg) protein is Demethylmenaquinone methyltransferase.